Consider the following 55-residue polypeptide: Large ribosomal subunit protein bL33 (55 aa).

The protein belongs to the bacterial ribosomal protein bL33 family.

This is Large ribosomal subunit protein bL33 from Caulobacter vibrioides (strain ATCC 19089 / CIP 103742 / CB 15) (Caulobacter crescentus).